Consider the following 239-residue polypeptide: tRNA (guanine-N(1)-)-methyltransferase (239 aa).

S-adenosyl-L-methionine contacts are provided by residues Gly-110 and 130–135; that span reads IGDYVL.

Belongs to the RNA methyltransferase TrmD family. As to quaternary structure, homodimer.

The protein resides in the cytoplasm. The enzyme catalyses guanosine(37) in tRNA + S-adenosyl-L-methionine = N(1)-methylguanosine(37) in tRNA + S-adenosyl-L-homocysteine + H(+). Functionally, specifically methylates guanosine-37 in various tRNAs. In Borrelia garinii subsp. bavariensis (strain ATCC BAA-2496 / DSM 23469 / PBi) (Borreliella bavariensis), this protein is tRNA (guanine-N(1)-)-methyltransferase.